Reading from the N-terminus, the 449-residue chain is PGL/p-HBAD biosynthesis rhamnosyltransferase (449 aa).

Belongs to the glycosyltransferase 28 family.

Functionally, catalyzes the transfer of the first rhamnosyl residue on p-hydroxybenzoic acid or phenolphthiocerol derivatives to form, after O-methylation at position 2 of the sugar unit, mono-O-methyl-glycosyl-p-hydroxybenzoic acid derivative (p-HBAD I) and 2-O-methyl-rhamnosyl-phenolphthiocerol dimycocerosate (also called mycoside B) during p-hydroxybenzoic acid derivatives (p-HBAD) and glycosylated phenolphthiocerol dimycocerosates (PGL) biosynthesis. The polypeptide is PGL/p-HBAD biosynthesis rhamnosyltransferase (Mycobacterium bovis (strain BCG / Pasteur 1173P2)).